Consider the following 155-residue polypeptide: 6,7-dimethyl-8-ribityllumazine synthase (155 aa).

5-amino-6-(D-ribitylamino)uracil contacts are provided by residues Tyr-23, 57-59 (AWE), and 81-83 (CVI). 86–87 (ET) provides a ligand contact to (2S)-2-hydroxy-3-oxobutyl phosphate. His-89 serves as the catalytic Proton donor. Residue Phe-114 coordinates 5-amino-6-(D-ribitylamino)uracil. Residue Arg-128 coordinates (2S)-2-hydroxy-3-oxobutyl phosphate.

It belongs to the DMRL synthase family.

It carries out the reaction (2S)-2-hydroxy-3-oxobutyl phosphate + 5-amino-6-(D-ribitylamino)uracil = 6,7-dimethyl-8-(1-D-ribityl)lumazine + phosphate + 2 H2O + H(+). It participates in cofactor biosynthesis; riboflavin biosynthesis; riboflavin from 2-hydroxy-3-oxobutyl phosphate and 5-amino-6-(D-ribitylamino)uracil: step 1/2. Functionally, catalyzes the formation of 6,7-dimethyl-8-ribityllumazine by condensation of 5-amino-6-(D-ribitylamino)uracil with 3,4-dihydroxy-2-butanone 4-phosphate. This is the penultimate step in the biosynthesis of riboflavin. The chain is 6,7-dimethyl-8-ribityllumazine synthase from Rhodopirellula baltica (strain DSM 10527 / NCIMB 13988 / SH1).